Consider the following 432-residue polypeptide: Sonic hedgehog protein (432 aa).

Positions 1 to 26 (MDEMILLRRVLLAGFICALLVPSGLS) are cleaved as a signal peptide. Cysteine 27 carries the N-palmitoyl cysteine lipid modification. A Cardin-Weintraub motif is present at residues 35-41 (TRKRFKK). Residues glutamate 92, glutamate 93, aspartate 98, threonine 128, glutamate 129, aspartate 132, and aspartate 134 each coordinate Ca(2+). The Zn(2+) site is built by histidine 143, aspartate 150, and histidine 185. Glycine 200 is lipidated: Cholesterol glycine ester.

Belongs to the hedgehog family. Interacts with HHATL/GUP1 which negatively regulates HHAT-mediated palmitoylation of the SHH N-terminus. Interacts with BOC and CDON. Interacts with HHIP. Interacts with DISP1 via its cholesterol anchor. Interacts with SCUBE2. As to quaternary structure, multimer. Post-translationally, the C-terminal domain displays an autoproteolysis activity and a cholesterol transferase activity. Both activities result in the cleavage of the full-length protein and covalent attachment of a cholesterol moiety to the C-terminal of the newly generated N-terminal fragment (ShhN). Cholesterylation is required for the sonic hedgehog protein N-product targeting to lipid rafts and multimerization. ShhN is the active species in both local and long-range signaling, whereas the C-product (ShhC) is degraded in the reticulum endoplasmic. In terms of processing, N-palmitoylation by HHAT of ShhN is required for sonic hedgehog protein N-product multimerization and full activity. It is a prerequisite for the membrane-proximal positioning and the subsequent shedding of this N-terminal peptide. The lipidated N- and C-terminal peptides of ShhNp can be cleaved (shedding). The N-terminal palmitoylated peptide is cleaved at the Cardin-Weintraub (CW) motif site. The cleavage reduced the interactions with heparan sulfate. The cleavage is enhanced by SCUBE2.

It is found in the endoplasmic reticulum membrane. It localises to the golgi apparatus membrane. The protein resides in the cell membrane. It catalyses the reaction glycyl-L-cysteinyl-[protein] + cholesterol + H(+) = [protein]-C-terminal glycyl cholesterol ester + N-terminal L-cysteinyl-[protein]. Functionally, the C-terminal part of the sonic hedgehog protein precursor displays an autoproteolysis and a cholesterol transferase activity. Both activities result in the cleavage of the full-length protein into two parts (ShhN and ShhC) followed by the covalent attachment of a cholesterol moiety to the C-terminal of the newly generated ShhN. Both activities occur in the endoplasmic reticulum. Once cleaved, ShhC is degraded in the endoplasmic reticulum. In terms of biological role, the dually lipidated sonic hedgehog protein N-product (ShhNp) is a morphogen which is essential for a variety of patterning events during development. Induces ventral cell fate in the neural tube and somites. Involved in the patterning of the anterior-posterior axis of the developing limb bud. Essential for axon guidance. Binds to the patched (PTCH1) receptor, which functions in association with smoothened (SMO), to activate the transcription of target genes. In the absence of SHH, PTCH1 represses the constitutive signaling activity of SMO. The polypeptide is Sonic hedgehog protein (Cynops pyrrhogaster (Japanese fire-bellied newt)).